Reading from the N-terminus, the 284-residue chain is 2-dehydro-3-deoxyphosphooctonate aldolase (284 aa).

The protein belongs to the KdsA family.

It is found in the cytoplasm. The catalysed reaction is D-arabinose 5-phosphate + phosphoenolpyruvate + H2O = 3-deoxy-alpha-D-manno-2-octulosonate-8-phosphate + phosphate. It participates in carbohydrate biosynthesis; 3-deoxy-D-manno-octulosonate biosynthesis; 3-deoxy-D-manno-octulosonate from D-ribulose 5-phosphate: step 2/3. Its pathway is bacterial outer membrane biogenesis; lipopolysaccharide biosynthesis. The protein is 2-dehydro-3-deoxyphosphooctonate aldolase of Paraburkholderia xenovorans (strain LB400).